Consider the following 344-residue polypeptide: Heat-inducible transcription repressor HrcA (344 aa).

The protein belongs to the HrcA family.

Its function is as follows. Negative regulator of class I heat shock genes (grpE-dnaK-dnaJ and groELS operons). Prevents heat-shock induction of these operons. In Streptococcus equi subsp. equi (strain 4047), this protein is Heat-inducible transcription repressor HrcA.